We begin with the raw amino-acid sequence, 339 residues long: Phenylalanine--tRNA ligase alpha subunit (339 aa).

Position 253 (Glu253) interacts with Mg(2+).

Belongs to the class-II aminoacyl-tRNA synthetase family. Phe-tRNA synthetase alpha subunit type 1 subfamily. In terms of assembly, tetramer of two alpha and two beta subunits. Mg(2+) serves as cofactor.

It localises to the cytoplasm. The enzyme catalyses tRNA(Phe) + L-phenylalanine + ATP = L-phenylalanyl-tRNA(Phe) + AMP + diphosphate + H(+). The polypeptide is Phenylalanine--tRNA ligase alpha subunit (Geobacter sulfurreducens (strain ATCC 51573 / DSM 12127 / PCA)).